The sequence spans 222 residues: Ribosomal RNA small subunit methyltransferase G (222 aa).

S-adenosyl-L-methionine contacts are provided by residues G84, F89, 141 to 142 (VE), and R154.

Belongs to the methyltransferase superfamily. RNA methyltransferase RsmG family.

The protein localises to the cytoplasm. It catalyses the reaction guanosine(527) in 16S rRNA + S-adenosyl-L-methionine = N(7)-methylguanosine(527) in 16S rRNA + S-adenosyl-L-homocysteine. Its function is as follows. Specifically methylates the N7 position of guanine in position 527 of 16S rRNA. The chain is Ribosomal RNA small subunit methyltransferase G from Bradyrhizobium sp. (strain BTAi1 / ATCC BAA-1182).